The sequence spans 1242 residues: DNA polymerase catalytic subunit (1242 aa).

Disordered regions lie at residues G14–Q38, L644–S665, E877–N898, and T1108–S1163. Low complexity predominate over residues G653–S665. Over residues P1110–S1119 the composition is skewed to polar residues. A compositionally biased stretch (basic and acidic residues) spans E1145–K1155.

It belongs to the DNA polymerase type-B family. As to quaternary structure, forms a complex with the ssDNA-binding protein UL57, the DNA polymerase processivity factor UL44, and the alkaline exonuclease UL98. Interacts with the putative helicase-primase complex composed of UL70, UL102 and UL105 proteins; these interactions may coordinate leading and lagging strand DNA synthesis at the replication fork.

It localises to the host nucleus. It carries out the reaction DNA(n) + a 2'-deoxyribonucleoside 5'-triphosphate = DNA(n+1) + diphosphate. Replicates viral genomic DNA in the late phase of lytic infection, producing long concatemeric DNA. The replication complex is composed of six viral proteins: the DNA polymerase, processivity factor, primase, primase-associated factor, helicase, and ssDNA-binding protein. The protein is DNA polymerase catalytic subunit (UL54) of Homo sapiens (Human).